The chain runs to 40 residues: Large ribosomal subunit protein bL36A (40 aa).

This sequence belongs to the bacterial ribosomal protein bL36 family.

The sequence is that of Large ribosomal subunit protein bL36A from Saccharopolyspora erythraea (strain ATCC 11635 / DSM 40517 / JCM 4748 / NBRC 13426 / NCIMB 8594 / NRRL 2338).